A 716-amino-acid polypeptide reads, in one-letter code: Tensin-4 (716 aa).

A signal peptide spans 1-17 (MSQVMSSPLLAGGPAVG). Disordered regions lie at residues 119–274 (LPPG…VSML), 301–322 (QSSSRSLESPSSSSSSLNNLGP), 334–366 (VPSNATPSMGQPRATRSPPLAKEHASSCPPSIT), and 379–436 (GFPE…RDMQ). Residues 138–150 (KKKEEPEALDIKY) are compositionally biased toward basic and acidic residues. Over residues 197-206 (SSESLIFSGS) the composition is skewed to polar residues. Positions 214 to 228 (PAPPSAVPSSHPPTS) are enriched in pro residues. S248 is subject to Phosphoserine. The segment covering 265–274 (PQLSSRVSML) has biased composition (polar residues). Over residues 402–419 (ATSSSMPCPATRSHSQTL) the composition is skewed to polar residues. The SH2 domain occupies 449 to 556 (WFKPSISREQ…ALPCKLVIPQ (108 aa)). The PTB domain maps to 583–704 (CHALYLSSVS…TLQPASQVIR (122 aa)).

The protein belongs to the PTEN phosphatase protein family. As to quaternary structure, interacts (via SH2 domain) with Rho GTPase-activating protein DLC1 (via C-terminus); the interaction is independent of DLC1 tyrosine phosphorylation. Interacts with integrin ITGB1; the interaction displaces tensin TNS3 from the ITGB1 cytoplasmic tail and promotes ITGB1 stability. Interacts (via SH2 domain) with E3 ubiquitin-protein ligase CBL (phosphorylated on 'Tyr-782'); the interaction is enhanced in the presence of EGF and reduces interaction of CBL with EGFR. Interacts (via SH2 domain) with receptor tyrosine kinase MET (when phosphorylated); the interaction increases MET protein stability.

It localises to the cell junction. Its subcellular location is the focal adhesion. It is found in the cytoplasm. The protein resides in the cytoskeleton. Functionally, promotes EGF-induced cell migration by displacing tensin TNS3 from the cytoplasmic tail of integrin ITGB1 which results in dissociation of TNS3 from focal adhesions, disassembly of actin stress fibers and initiation of cell migration. Suppresses ligand-induced degradation of EGFR by reducing EGFR ubiquitination in the presence of EGF. Increases MET protein stability by inhibiting MET endocytosis and subsequent lysosomal degradation which leads to increased cell survival, proliferation and migration. In Bos taurus (Bovine), this protein is Tensin-4 (TNS4).